A 119-amino-acid chain; its full sequence is Probable cyclase otaY (119 aa).

The protein belongs to the aurE cyclase family.

It participates in mycotoxin biosynthesis. Functionally, probable cyclase; part of the gene cluster that mediates the biosynthesis of ochratoxin A (OTA), a mycotoxin composed of a chlorinated type I polyketide dihydroisocoumarin moiety linked to L-phenylalanine, and demonstrated to have nephrotoxic, immunotoxic, genotoxic, neurotoxic, and teratogenic properties. OtaY is probably involved in the polyketide cyclization. The pathway begins with the highly reducing polyketide synthase otaA that catalyzes the formation of the isocoumarin group during the initial stages of biosynthesis, starting from one acetate and 4 malonate units, to originate the characteristic pentaketide skeleton 7-methylmellein (7-MM) of the OTA molecule. The newly identified cyclase otaY might be involved in the polyketide cyclization reaction during the initial steps of the OTA biosynthesis. 7-MM is then oxidized into 7-carboxymellein (also called ochratoxin beta) by the cytochrome P450 monooxygenase otaC. The NRPS encoded by the otaB gene is involved in the linking of phenylalanine to the dihydroisocoumarin ring. The reaction catalyzed by NRPS results in the production of ochratoxin B (OTB), which is the non-chlorinated analog of OTA and which subsequently serves as the substrate of the halogenase otaD for chlorination activity to form the final molecular structure of OTA, containing a chlorine atom in the C-5 position of the molecule. The chain is Probable cyclase otaY from Aspergillus niger (strain ATCC MYA-4892 / CBS 513.88 / FGSC A1513).